A 473-amino-acid chain; its full sequence is Photosystem II CP43 reaction center protein (473 aa).

A propeptide spanning residues 1-14 is cleaved from the precursor; sequence MKTLYSLRRFYPVE. Residue Thr15 is modified to N-acetylthreonine. Thr15 carries the post-translational modification Phosphothreonine. The next 5 helical transmembrane spans lie at 69-93, 134-155, 178-200, 255-275, and 291-312; these read LFEV…PHLA, LLGP…KDRN, KALY…RKIT, KPFA…LSYS, and WFNN…ASQA. Residue Glu367 participates in [CaMn4O5] cluster binding. A helical membrane pass occupies residues 447–471; the sequence is RARAAAAGFEKGIDRDFEPVLSMTP.

This sequence belongs to the PsbB/PsbC family. PsbC subfamily. As to quaternary structure, PSII is composed of 1 copy each of membrane proteins PsbA, PsbB, PsbC, PsbD, PsbE, PsbF, PsbH, PsbI, PsbJ, PsbK, PsbL, PsbM, PsbT, PsbX, PsbY, PsbZ, Psb30/Ycf12, at least 3 peripheral proteins of the oxygen-evolving complex and a large number of cofactors. It forms dimeric complexes. The cofactor is Binds multiple chlorophylls and provides some of the ligands for the Ca-4Mn-5O cluster of the oxygen-evolving complex. It may also provide a ligand for a Cl- that is required for oxygen evolution. PSII binds additional chlorophylls, carotenoids and specific lipids..

The protein resides in the plastid. The protein localises to the chloroplast thylakoid membrane. In terms of biological role, one of the components of the core complex of photosystem II (PSII). It binds chlorophyll and helps catalyze the primary light-induced photochemical processes of PSII. PSII is a light-driven water:plastoquinone oxidoreductase, using light energy to abstract electrons from H(2)O, generating O(2) and a proton gradient subsequently used for ATP formation. This chain is Photosystem II CP43 reaction center protein, found in Calycanthus floridus var. glaucus (Eastern sweetshrub).